The following is a 467-amino-acid chain: Venom prothrombin activator omicarin-C catalytic subunit (467 aa).

Residues 1–20 form the signal peptide; it reads MAPQLLLCLILTFLWSLPEA. Positions 21–40 are excised as a propeptide; it reads ESNVFLKSKVANRFLQRTKR. One can recognise a Gla domain in the interval 41 to 86; that stretch reads ANSLFEEFRSGNIERECIEERCSKEEAREVFEDDEKTETFWNVYVD. Residues E46, E47, E54, E56, E59, E60, E65, E66, E69, E72, and E75 each carry the 4-carboxyglutamate modification. The cysteines at positions 57 and 62 are disulfide-linked. Residues 86–122 form the EGF-like 1; calcium-binding domain; the sequence is DGDQCSSNPCHYRGTCKDGIGSYTCTCLFGYEGKNCE. Intrachain disulfides connect C90–C101, C95–C110, C112–C121, C129–C140, C136–C149, C151–C164, C172–C329, C216–C221, C236–C252, C377–C391, and C402–C430. O-linked (Hex...) serine glycosylation is present at S92. In terms of domain architecture, EGF-like 2 spans 129-164; sequence CRVDNGNCWHFCKPVQNDIQCSCAEGYLLGEDGHSC. A propeptide spans 182–209 (activation peptide); sequence REASLPDFVQSQNATLLKKSDNPSPDIR. The Peptidase S1 domain maps to 210–454; it reads IVNGMDCKLG…FILWIKRIMR (245 aa). H251 acts as the Charge relay system in catalysis. A glycan (N-linked (GlcNAc...) asparagine) is linked at N254. Catalysis depends on D309, which acts as the Charge relay system. Catalysis depends on S406, which acts as the Charge relay system.

The protein belongs to the peptidase S1 family. Snake venom subfamily. As to quaternary structure, heterodimer of a light and a heavy chains; disulfide-linked. Is associated with omicarin-C non-catalytic subunit (AC Q58L90) in a non-covalent manner. Gamma-carboxyglutamate residues are formed by vitamin K dependent carboxylation. These residues are essential for the binding of calcium. As to expression, expressed by the venom gland.

The protein localises to the secreted. It catalyses the reaction Selective cleavage of Arg-|-Thr and then Arg-|-Ile bonds in prothrombin to form thrombin.. Its activity is regulated as follows. Activated by calcium and negatively charged phospholipids. Snake prothrombin activator that attacks the hemostatic system of prey. This catalytic subunit is functionally similar to blood coagulation factor Xa. It requires a non-catalytic subunit present in the venom, which is similar to coagulation factor Va, to be fully active. The protein is Venom prothrombin activator omicarin-C catalytic subunit of Oxyuranus microlepidotus (Inland taipan).